Here is a 185-residue protein sequence, read N- to C-terminus: Ribosome-recycling factor (185 aa).

The protein belongs to the RRF family.

It is found in the cytoplasm. Its function is as follows. Responsible for the release of ribosomes from messenger RNA at the termination of protein biosynthesis. May increase the efficiency of translation by recycling ribosomes from one round of translation to another. The chain is Ribosome-recycling factor from Streptococcus pyogenes serotype M28 (strain MGAS6180).